The sequence spans 595 residues: Guanylate-binding protein 3 (595 aa).

Residues 1–309 (MAPEIHMTGP…NAISRGDLPC (309 aa)) are GTPase domain (Globular). The region spanning 35–276 (TQPVVVVAIV…FCSYIFSNSK (242 aa)) is the GB1/RHD3-type G domain. GTP is bound by residues 45–52 (GLYRTGKS), 67–69 (LGS), and 97–101 (DTEGL). A coiled-coil region spans residues 482–595 (EKEKEIEVEC…KRYMSHKLKI (114 aa)).

The protein belongs to the TRAFAC class dynamin-like GTPase superfamily. GB1/RHD3 GTPase family. GB1 subfamily. As to quaternary structure, heterodimer with other family members, including GBP1, GBP2 and GBP5. Dimerization regulates subcellular location.

The protein localises to the cytoplasm. It localises to the perinuclear region. The protein resides in the golgi apparatus membrane. It catalyses the reaction GTP + H2O = GDP + phosphate + H(+). Functionally, interferon (IFN)-inducible GTPase that plays important roles in innate immunity against a diverse range of bacterial, viral and protozoan pathogens. Hydrolyzes GTP very efficiently; GDP rather than GMP is the major reaction product. Following infection, recruited to the pathogen-containing vacuoles or vacuole-escaped bacteria and acts as a positive regulator of inflammasome assembly by promoting the release of inflammasome ligands from bacteria. Acts by promoting lysis of pathogen-containing vacuoles, releasing pathogens into the cytosol. Following pathogen release in the cytosol, promotes recruitment of proteins that mediate bacterial cytolysis: this liberates ligands that are detected by inflammasomes, such as lipopolysaccharide (LPS) that activates the non-canonical CASP4/CASP11 inflammasome or double-stranded DNA (dsDNA) that activates the AIM2 inflammasome. Exhibits antiviral activity against influenza virus. Its function is as follows. Shows the most prominent antiviral activity in epithelial cells. This chain is Guanylate-binding protein 3 (GBP3), found in Homo sapiens (Human).